The sequence spans 585 residues: Arginine--tRNA ligase (585 aa).

The short motif at 131–141 (ANPTGPMHVGH) is the 'HIGH' region element.

The protein belongs to the class-I aminoacyl-tRNA synthetase family. Monomer.

It localises to the cytoplasm. The catalysed reaction is tRNA(Arg) + L-arginine + ATP = L-arginyl-tRNA(Arg) + AMP + diphosphate. The chain is Arginine--tRNA ligase from Agrobacterium fabrum (strain C58 / ATCC 33970) (Agrobacterium tumefaciens (strain C58)).